A 404-amino-acid polypeptide reads, in one-letter code: Multidrug resistance protein MdtG (404 aa).

11 helical membrane passes run 19 to 39, 56 to 76, 90 to 110, 113 to 133, 144 to 164, 171 to 191, 222 to 242, 254 to 274, 288 to 308, 317 to 337, and 376 to 396; these read LGCFLTGAAFSLVMPFLPLYV, LVFSITFLFSAIASPFWGGLA, LGMAIVMLLMGMAQNIWQFLI, ALLGLLGGFIPNANALIATQV, TLSTGGVSGALLGPLAGGLLA, PVFFITASVLFICFLLTFFFI, LFVTTLIIQVATGSIAPILTL, IAFISGMIASVPGVAALLSAP, ILIVALIISVLLLIPMSFVQT, FLLGAADGALLPAVQTLLVYN, and AVFCVTAGVVLFNAIYSWNSL.

It belongs to the major facilitator superfamily. DHA1 family. MdtG (TC 2.A.1.2.20) subfamily.

The protein resides in the cell inner membrane. This Salmonella heidelberg (strain SL476) protein is Multidrug resistance protein MdtG.